A 76-amino-acid chain; its full sequence is Putative snRNP Sm-like protein (76 aa).

One can recognise a Sm domain in the interval arginine 4–glycine 76.

It belongs to the snRNP Sm proteins family.

The chain is Putative snRNP Sm-like protein from Pyrococcus furiosus (strain ATCC 43587 / DSM 3638 / JCM 8422 / Vc1).